The primary structure comprises 148 residues: Large ribosomal subunit protein uL15 (148 aa).

The interval 1–51 (MNLSNLKPAEGSTKTRKRIGRGPGSGLGGTSTRGHKGAKSRSGYSKKIGFE) is disordered. Residues 21–31 (RGPGSGLGGTS) are compositionally biased toward gly residues.

It belongs to the universal ribosomal protein uL15 family. Part of the 50S ribosomal subunit.

In terms of biological role, binds to the 23S rRNA. The sequence is that of Large ribosomal subunit protein uL15 from Phocaeicola vulgatus (strain ATCC 8482 / DSM 1447 / JCM 5826 / CCUG 4940 / NBRC 14291 / NCTC 11154) (Bacteroides vulgatus).